The primary structure comprises 368 residues: o-succinylbenzoate synthase (368 aa).

K183 (proton donor) is an active-site residue. 3 residues coordinate Mg(2+): D213, E239, and D264. The active-site Proton acceptor is K290.

It belongs to the mandelate racemase/muconate lactonizing enzyme family. MenC type 1 subfamily. As to quaternary structure, monomer. A divalent metal cation serves as cofactor.

The catalysed reaction is (1R,6R)-6-hydroxy-2-succinyl-cyclohexa-2,4-diene-1-carboxylate = 2-succinylbenzoate + H2O. Its pathway is quinol/quinone metabolism; 1,4-dihydroxy-2-naphthoate biosynthesis; 1,4-dihydroxy-2-naphthoate from chorismate: step 4/7. It participates in cofactor biosynthesis; phylloquinone biosynthesis. Converts 2-succinyl-6-hydroxy-2,4-cyclohexadiene-1-carboxylate (SHCHC) to 2-succinylbenzoate (OSB). Does not show N-succinylamino acid racemase (NSAR) activity with N-succinyl-L-phenylglycine as substrate. The sequence is that of o-succinylbenzoate synthase from Desulfotalea psychrophila (strain LSv54 / DSM 12343).